A 189-amino-acid polypeptide reads, in one-letter code: Casparian strip membrane protein 1 (189 aa).

Topologically, residues 1 to 25 are cytoplasmic; the sequence is MMQAESGSAEAKGPLPPPVGRKRRG. Residues 26–46 traverse the membrane as a helical segment; that stretch reads LGILDFLLRLLAIGATLSAAI. Residues 47-73 are Extracellular-facing; sequence TMGTTNETLQFFTQFFQFKARFYDLSA. N52 carries N-linked (GlcNAc...) asparagine glycosylation. Residues 74–94 traverse the membrane as a helical segment; sequence FIYFVIANAIVGGYLLLSLPI. At 95–108 the chain is on the cytoplasmic side; it reads SILNIVRPRAASSR. Residues 109-129 traverse the membrane as a helical segment; that stretch reads VFLIFFDTVMVAVCTSGAAAA. Topologically, residues 130–158 are extracellular; the sequence is VAILYVARKGNSRTNWFAICQRFNSFCNQ. Residues 159–179 traverse the membrane as a helical segment; the sequence is AIGAVSASFAGVVFLILLVLL. Over 180–189 the chain is Cytoplasmic; the sequence is SASTLYRRRP.

This sequence belongs to the Casparian strip membrane proteins (CASP) family. Homodimer and heterodimers.

The protein resides in the cell membrane. Functionally, regulates membrane-cell wall junctions and localized cell wall deposition. Required for establishment of the Casparian strip membrane domain (CSD) and the subsequent formation of Casparian strips, a cell wall modification of the root endodermis that determines an apoplastic barrier between the intraorganismal apoplasm and the extraorganismal apoplasm and prevents lateral diffusion. In Picea glauca (White spruce), this protein is Casparian strip membrane protein 1.